We begin with the raw amino-acid sequence, 179 residues long: Pyridoxal 5'-phosphate synthase subunit PdxT (179 aa).

48–50 (GES) contributes to the L-glutamine binding site. Catalysis depends on Cys79, which acts as the Nucleophile. Residues Arg101 and 127–128 (IR) each bind L-glutamine. Catalysis depends on charge relay system residues His163 and Glu165.

This sequence belongs to the glutaminase PdxT/SNO family. As to quaternary structure, in the presence of PdxS, forms a dodecamer of heterodimers. Only shows activity in the heterodimer.

The enzyme catalyses aldehydo-D-ribose 5-phosphate + D-glyceraldehyde 3-phosphate + L-glutamine = pyridoxal 5'-phosphate + L-glutamate + phosphate + 3 H2O + H(+). It carries out the reaction L-glutamine + H2O = L-glutamate + NH4(+). Its pathway is cofactor biosynthesis; pyridoxal 5'-phosphate biosynthesis. Its function is as follows. Catalyzes the hydrolysis of glutamine to glutamate and ammonia as part of the biosynthesis of pyridoxal 5'-phosphate. The resulting ammonia molecule is channeled to the active site of PdxS. The sequence is that of Pyridoxal 5'-phosphate synthase subunit PdxT from Francisella tularensis subsp. tularensis (strain FSC 198).